The following is a 549-amino-acid chain: uncharacterized protein (549 aa).

The first 19 residues, 1-19 (MNWRRIVWLLALVTLPTLA), serve as a signal peptide directing secretion.

This is an uncharacterized protein from Escherichia coli (strain K12).